The chain runs to 194 residues: Large ribosomal subunit protein eL15 (194 aa).

The segment at 158–194 (ANRGLTSAGKKGRGLMYKGKGAEKARPGVRANGKKTK) is disordered.

This sequence belongs to the eukaryotic ribosomal protein eL15 family.

In Methanococcus maripaludis (strain DSM 14266 / JCM 13030 / NBRC 101832 / S2 / LL), this protein is Large ribosomal subunit protein eL15.